A 1181-amino-acid polypeptide reads, in one-letter code: MGPERTGAAPLPLLLVLALSQGILNCCLAYNVGLPEAKIFSGPSSEQFGYAVQQFINPKGNWLLVGSPWSGFPENRMGDVYKCPVDLSTATCEKLNLQTSTSIPNVTEMKTNMSLGLILTRNMGTGGFLTCGPLWAQQCGNQYYTTGVCSDISPDFQLSASFSPATQPCPSLIDVVVVCDESNSIYPWDAVKNFLEKFVQGLDIGPTKTQVGLIQYANNPRVVFNLNTYKTKEEMIVATSQTSQYGGDLTNTFGAIQYARKYAYSAASGGRRSATKVMVVVTDGESHDGSMLKAVIDQCNHDNILRFGIAVLGYLNRNALDTKNLIKEIKAIASIPTERYFFNVSDEAALLEKAGTLGEQIFSIEGTVQGGDNFQMEMSQVGFSADYSSQNDILMLGAVGAFGWSGTIVQKTSHGHLIFPKQAFDQILQDRNHSSYLGYSVAAISTGESTHFVAGAPRANYTGQIVLYSVNENGNITVIQAHRGDQIGSYFGSVLCSVDVDKDTITDVLLVGAPMYMSDLKKEEGRVYLFTIKEGILGQHQFLEGPEGIENTRFGSAIAALSDINMDGFNDVIVGSPLENQNSGAVYIYNGHQGTIRTKYSQKILGSDGAFRSHLQYFGRSLDGYGDLNGDSITDVSIGAFGQVVQLWSQSIADVAIEASFTPEKITLVNKNAQIILKLCFSAKFRPTKQNNQVAIVYNITLDADGFSSRVTSRGLFKENNERCLQKNMVVNQAQSCPEHIIYIQEPSDVVNSLDLRVDISLENPGTSPALEAYSETAKVFSIPFHKDCGEDGLCISDLVLDVRQIPAAQEQPFIVSNQNKRLTFSVTLKNKRESAYNTGIVVDFSENLFFASFSLPVDGTEVTCQVAASQKSVACDVGYPALKREQQVTFTINFDFNLQNLQNQASLSFQALSESQEENKADNLVNLKIPLLYDAEIHLTRSTNINFYEISSDGNVPSIVHSFEDVGPKFIFSLKVTTGSVPVSMATVIIHIPQYTKEKNPLMYLTGVQTDKAGDISCNADINPLKIGQTSSSVSFKSENFRHTKELNCRTASCSNVTCWLKDVHMKGEYFVNVTTRIWNGTFASSTFQTVQLTAAAEINTYNPEIYVIEDNTVTIPLMIMKPDEKAEVPTGVIIGSIIAGILLLLALVAILWKLGFFKRKYEKMTKNPDEIDETTELSS.

An N-terminal signal peptide occupies residues 1–29 (MGPERTGAAPLPLLLVLALSQGILNCCLA). The Extracellular segment spans residues 30–1132 (YNVGLPEAKI…KPDEKAEVPT (1103 aa)). 2 FG-GAP repeats span residues 34-92 (LPEA…TATC) and 101-161 (TSIP…LSAS). Cys83 and Cys92 are disulfide-bonded. N-linked (GlcNAc...) asparagine glycosylation is found at Asn105, Asn112, and Asn343. A VWFA domain is found at 188 to 365 (WDAVKNFLEK…TLGEQIFSIE (178 aa)). FG-GAP repeat units lie at residues 366 to 420 (GTVQ…LIFP), 423 to 475 (AFDQ…ENGN), 477 to 539 (TVIQ…ILGQ), 540 to 598 (HQFL…TIRT), and 602 to 664 (QKIL…FTPE). N-linked (GlcNAc...) asparagine glycans are attached at residues Asn432, Asn460, and Asn475. Residues Asp499, Asp501, Asp503, Asp507, Asp563, Asn565, Asp567, Asp571, Asp627, Asn629, Asp631, and Asp635 each coordinate Ca(2+). 5 disulfide bridges follow: Cys680–Cys737, Cys789–Cys795, Cys865–Cys876, Cys1019–Cys1050, and Cys1055–Cys1060. The N-linked (GlcNAc...) asparagine glycan is linked to Asn699. N-linked (GlcNAc...) asparagine glycosylation is found at Asn1057, Asn1074, and Asn1081. A helical transmembrane segment spans residues 1133 to 1154 (GVIIGSIIAGILLLLALVAILW). Residues 1155-1161 (KLGFFKR) form an interaction with HPS5 region. The Cytoplasmic segment spans residues 1155–1181 (KLGFFKRKYEKMTKNPDEIDETTELSS). The GFFKR motif motif lies at 1157 to 1161 (GFFKR).

Belongs to the integrin alpha chain family. Heterodimer of an alpha and a beta subunit. Alpha-2 associates with beta-1. Interacts with HPS5 and RAB21. As to quaternary structure, (Microbial infection) Integrin ITGA2:ITGB1 interacts (via ITAG2 I-domain) with rotavirus A VP4 protein. In terms of assembly, (Microbial infection) Integrin ITGA2:ITGB1 interacts with human echoviruses 1 and 8 capsid proteins.

The protein resides in the membrane. In terms of biological role, integrin alpha-2/beta-1 is a receptor for laminin, collagen, collagen C-propeptides, fibronectin and E-cadherin. It recognizes the proline-hydroxylated sequence G-F-P-G-E-R in collagen. It is responsible for adhesion of platelets and other cells to collagens, modulation of collagen and collagenase gene expression, force generation and organization of newly synthesized extracellular matrix. (Microbial infection) Integrin ITGA2:ITGB1 acts as a receptor for Human rotavirus A. Functionally, (Microbial infection) Integrin ITGA2:ITGB1 acts as a receptor for Human echoviruses 1 and 8. This is Integrin alpha-2 (ITGA2) from Homo sapiens (Human).